The chain runs to 717 residues: Polyribonucleotide nucleotidyltransferase (717 aa).

Mg(2+) contacts are provided by Asp-486 and Asp-492. The region spanning 553-612 is the KH domain; that stretch reads PRMITVKINPEKIRDVIGKGGSTIQALTKETGCTIDIQEDGTITIASTSSEGMAEAKRRI. Residues 622–690 form the S1 motif domain; sequence GKIYSGTVLK…EKGRMRLSIK (69 aa). A disordered region spans residues 690-717; it reads KAAKAEEGDVPATAPQAPGAGDATSQQQ.

It belongs to the polyribonucleotide nucleotidyltransferase family. The cofactor is Mg(2+).

The protein localises to the cytoplasm. It carries out the reaction RNA(n+1) + phosphate = RNA(n) + a ribonucleoside 5'-diphosphate. Functionally, involved in mRNA degradation. Catalyzes the phosphorolysis of single-stranded polyribonucleotides processively in the 3'- to 5'-direction. This is Polyribonucleotide nucleotidyltransferase from Ralstonia nicotianae (strain ATCC BAA-1114 / GMI1000) (Ralstonia solanacearum).